The primary structure comprises 195 residues: Probable nicotinate-nucleotide adenylyltransferase (195 aa).

It belongs to the NadD family.

The catalysed reaction is nicotinate beta-D-ribonucleotide + ATP + H(+) = deamido-NAD(+) + diphosphate. It functions in the pathway cofactor biosynthesis; NAD(+) biosynthesis; deamido-NAD(+) from nicotinate D-ribonucleotide: step 1/1. In terms of biological role, catalyzes the reversible adenylation of nicotinate mononucleotide (NaMN) to nicotinic acid adenine dinucleotide (NaAD). This Gluconobacter oxydans (strain 621H) (Gluconobacter suboxydans) protein is Probable nicotinate-nucleotide adenylyltransferase.